We begin with the raw amino-acid sequence, 341 residues long: Fe-S cluster assembly protein DRE2 (341 aa).

An N-terminal SAM-like domain region spans residues 1 to 157 (MNTLLLLHPT…FKKLSSPPTL (157 aa)). The interval 151-171 (LSSPPTLTDSSEADEDEESQL) is disordered. The linker stretch occupies residues 157–204 (LTDSSEADEDEESQLNEKLKGSKLIYFDESSDDEIIDEDELLRDDDGA). The span at 161 to 170 (SEADEDEESQ) shows a compositional bias: acidic residues. [2Fe-2S] cluster is bound by residues Cys-215, Cys-227, Cys-230, and Cys-232. The fe-S binding site A stretch occupies residues 215–232 (CALPNGKRRKKACKDCTC). Residues Cys-304, Cys-307, Cys-315, and Cys-318 each coordinate [4Fe-4S] cluster. 2 short sequence motifs (cx2C motif) span residues 304–307 (CGSC) and 315–318 (CDGC). Residues 304 to 318 (CGSCALGDAFRCDGC) are fe-S binding site B.

Belongs to the anamorsin family. Monomer. Interacts with TAH18. Interacts with MIA40. Requires [2Fe-2S] cluster as cofactor. [4Fe-4S] cluster is required as a cofactor.

The protein localises to the cytoplasm. It localises to the mitochondrion intermembrane space. Functionally, component of the cytosolic iron-sulfur (Fe-S) protein assembly (CIA) machinery required for the maturation of extramitochondrial Fe-S proteins. Part of an electron transfer chain functioning in an early step of cytosolic Fe-S biogenesis, facilitating the de novo assembly of a [4Fe-4S] cluster on the scaffold complex CFD1-NBP35. Electrons are transferred to DRE2 from NADPH via the FAD- and FMN-containing protein TAH18. TAH18-DRE2 are also required for the assembly of the diferric tyrosyl radical cofactor of ribonucleotide reductase (RNR), probably by providing electrons for reduction during radical cofactor maturation in the catalytic small subunit RNR2. This is Fe-S cluster assembly protein DRE2 from Komagataella phaffii (strain GS115 / ATCC 20864) (Yeast).